A 188-amino-acid polypeptide reads, in one-letter code: Protein SYC1 (188 aa).

In terms of assembly, component of the cleavage and polyadenylation factor (CPF) complex, which is composed of at least PTI1, SYC1, SSU72, GLC7, MPE1, REF2, PFS2, PTA1, YSH1/BRR5, SWD2, CFT2/YDH1, YTH1, CFT1/YHH1, FIP1 and PAP1. Component of the APT complex, which is a subcomplex of CPF, and is composed of PTI1, SYC1, SSU72, GLC7, REF2, PTA1 and SWD2.

The protein localises to the nucleus. Component of the cleavage and polyadenylation factor (CPF) complex, which plays a key role in polyadenylation-dependent pre-mRNA 3'-end formation and cooperates with cleavage factors including the CFIA complex and NAB4/CFIB. Component of the APT complex, which may be involved in polyadenylation-independent transcript 3'-end formation, including snoRNAs and snRNAs. This is Protein SYC1 (SYC1) from Saccharomyces cerevisiae (strain ATCC 204508 / S288c) (Baker's yeast).